The primary structure comprises 517 residues: Crotonobetaine/carnitine--CoA ligase (517 aa).

Belongs to the ATP-dependent AMP-binding enzyme family.

It carries out the reaction 4-(trimethylamino)butanoate + ATP + CoA = 4-(trimethylamino)butanoyl-CoA + AMP + diphosphate. It catalyses the reaction crotonobetaine + ATP + CoA = crotonobetainyl-CoA + AMP + diphosphate. The enzyme catalyses (R)-carnitine + ATP + CoA = (R)-carnitinyl-CoA + AMP + diphosphate. The protein operates within amine and polyamine metabolism; carnitine metabolism. Its function is as follows. Catalyzes the transfer of CoA to carnitine, generating the initial carnitinyl-CoA needed for the CaiB reaction cycle. Also has activity toward crotonobetaine and gamma-butyrobetaine. The polypeptide is Crotonobetaine/carnitine--CoA ligase (Escherichia coli O17:K52:H18 (strain UMN026 / ExPEC)).